Here is a 306-residue protein sequence, read N- to C-terminus: uncharacterized protein (306 aa).

To M.tuberculosis Rv1486c, M.bovis Mb1522c and M.leprae ML1804.

This is an uncharacterized protein from Mycobacterium avium.